We begin with the raw amino-acid sequence, 787 residues long: uncharacterized protein (787 aa).

Residue M1 is modified to N-acetylmethionine. Disordered regions lie at residues 1–115 (MFDG…NDHK), 130–200 (TNPF…QRSE), and 217–238 (VSSGSSLSLDTSENSDTKASQD). The segment covering 36–54 (VPSTIKKSTNIARTSTAET) has biased composition (polar residues). A Phosphoserine modification is found at S63. A compositionally biased stretch (polar residues) spans 130-142 (TNPFTTSANSNAH). The span at 160 to 169 (SITTSISNNT) shows a compositional bias: low complexity. The segment covering 170 to 184 (TKEEIESNNDSERDS) has biased composition (basic and acidic residues). Over residues 218 to 230 (SSGSSLSLDTSEN) the composition is skewed to low complexity. A phosphoserine mark is found at S254, S313, S342, S345, S390, S477, S492, S546, S683, and S699.

It localises to the cytoplasm. This is an uncharacterized protein from Saccharomyces cerevisiae (strain ATCC 204508 / S288c) (Baker's yeast).